Here is a 209-residue protein sequence, read N- to C-terminus: Thymidylate kinase (209 aa).

10 to 17 is a binding site for ATP; that stretch reads GLDGAGKS.

It belongs to the thymidylate kinase family.

The catalysed reaction is dTMP + ATP = dTDP + ADP. Phosphorylation of dTMP to form dTDP in both de novo and salvage pathways of dTTP synthesis. This Francisella tularensis subsp. novicida (strain U112) protein is Thymidylate kinase.